The primary structure comprises 114 residues: UPF0342 protein lp_1415 (114 aa).

This sequence belongs to the UPF0342 family.

This Lactiplantibacillus plantarum (strain ATCC BAA-793 / NCIMB 8826 / WCFS1) (Lactobacillus plantarum) protein is UPF0342 protein lp_1415.